The sequence spans 270 residues: tRNA (guanine-N(1)-)-methyltransferase (270 aa).

S-adenosyl-L-methionine contacts are provided by residues G113 and 133-138 (IGDYVL). Positions 251–270 (APTEGTGLIHHRDVEGPGEG) are disordered. The span at 260 to 270 (HHRDVEGPGEG) shows a compositional bias: basic and acidic residues.

Belongs to the RNA methyltransferase TrmD family. In terms of assembly, homodimer.

The protein resides in the cytoplasm. It catalyses the reaction guanosine(37) in tRNA + S-adenosyl-L-methionine = N(1)-methylguanosine(37) in tRNA + S-adenosyl-L-homocysteine + H(+). Specifically methylates guanosine-37 in various tRNAs. The chain is tRNA (guanine-N(1)-)-methyltransferase from Frankia casuarinae (strain DSM 45818 / CECT 9043 / HFP020203 / CcI3).